Consider the following 279-residue polypeptide: Putative colanic acid biosynthesis glycosyl transferase WcaA (279 aa).

The protein to R.meliloti ExoO.

It participates in slime biogenesis; slime polysaccharide biosynthesis. The protein is Putative colanic acid biosynthesis glycosyl transferase WcaA (wcaA) of Escherichia coli (strain K12).